Here is a 311-residue protein sequence, read N- to C-terminus: ADP-ribosyl cyclase/cyclic ADP-ribose hydrolase 2 (311 aa).

A signal peptide spans 1–24 (MAVQGGLLSLWLWLWLSLLTVLLG). 3 disulfides stabilise this stretch: C46-C60, C76-C156, and C137-C150. N-linked (GlcNAc...) asparagine glycosylation is found at N59 and N88. W102 contacts NAD(+). W102 lines the nicotinamide pocket. N-linked (GlcNAc...) asparagine glycosylation occurs at N141. W165 serves as a coordination point for NAD(+). An N-linked (GlcNAc...) asparagine glycan is attached at N185. E203 serves as a coordination point for NAD(+). 2 disulfides stabilise this stretch: C231–C252 and C264–C273. S286 carries GPI-anchor amidated serine lipidation. Residues 287–311 (ASLHAIGDASLLISLLVALASSSQA) constitute a propeptide that is removed on maturation.

It belongs to the ADP-ribosyl cyclase family. In terms of assembly, homodimer. As to expression, expressed in the bone marrow, spleen and thymus in lymphoid organs, and the lung, kidney and heart in non-lymphoid organs.

It is found in the cell membrane. It carries out the reaction NAD(+) + H2O = ADP-D-ribose + nicotinamide + H(+). The enzyme catalyses NAD(+) = cyclic ADP-beta-D-ribose + nicotinamide + H(+). The catalysed reaction is cyclic ADP-beta-D-ribose + H2O = ADP-D-ribose. Its function is as follows. Catalyzes both the synthesis of cyclic ADP-beta-D-ribose (cADPR) from NAD(+), and its hydrolysis to ADP-D-ribose (ADPR). Cyclic ADPR is known to serve as an endogenous second messenger that elicits calcium release from intracellular stores, and thus regulates the mobilization of intracellular calcium. May be involved in pre-B-cell growth. In Mus musculus (Mouse), this protein is ADP-ribosyl cyclase/cyclic ADP-ribose hydrolase 2 (Bst1).